Here is a 56-residue protein sequence, read N- to C-terminus: U-limacoditoxin(3)-Dv21 (56 aa).

The signal sequence occupies residues 1 to 19; that stretch reads MKKVIMLLLIFALFAYALS. 3 disulfides stabilise this stretch: cysteine 26–cysteine 41, cysteine 33–cysteine 46, and cysteine 40–cysteine 53.

Belongs to the limacoditoxin-22 family. As to expression, expressed by the venom secretory cell of the spine. The spine is a cuticular structure containing a single large nucleated venom-secreting cell at its base. It is an independent unit capable of producing, storing and injecting venom. On the back of D.vulnerans caterpillars, spines are grouped together by 50 to 100 to form scoli, of which there are eight in D.vulnerans.

Its subcellular location is the secreted. Functionally, probable toxin. Shows a moderate antiparasitic activity against the major pathogenic nematode of ruminants (H.contortus, IC(50)=22.1 uM). Does not show insecticidal activities. Does not induce increase in intracellular calcium in mouse DRG neurons, suggesting that it does not induce pain. In Doratifera vulnerans (Mottled cup moth), this protein is U-limacoditoxin(3)-Dv21.